Consider the following 137-residue polypeptide: Large-conductance mechanosensitive channel (137 aa).

The next 2 membrane-spanning stretches (helical) occupy residues 15 to 35 and 81 to 101; these read VDLA…TSLV and GKFI…FFVI.

This sequence belongs to the MscL family. Homopentamer.

It is found in the cell inner membrane. Channel that opens in response to stretch forces in the membrane lipid bilayer. May participate in the regulation of osmotic pressure changes within the cell. This chain is Large-conductance mechanosensitive channel, found in Hyphomonas neptunium (strain ATCC 15444).